A 301-amino-acid chain; its full sequence is Probable alpha-L-glutamate ligase (301 aa).

Residues 104–287 (LQLLSRRGIG…VAGMIIEHLE (184 aa)) enclose the ATP-grasp domain. ATP-binding positions include Lys141, 178-179 (EY), Asp187, and 211-213 (RSN). 3 residues coordinate Mg(2+): Asp248, Glu260, and Asn262. Mn(2+)-binding residues include Asp248, Glu260, and Asn262.

This sequence belongs to the RimK family. It depends on Mg(2+) as a cofactor. Requires Mn(2+) as cofactor.

The chain is Probable alpha-L-glutamate ligase from Pseudomonas putida (strain GB-1).